The chain runs to 262 residues: tRNA (guanine-N(1)-)-methyltransferase (262 aa).

Residues G111 and 130–135 (LGDFVL) each bind S-adenosyl-L-methionine.

It belongs to the RNA methyltransferase TrmD family. Homodimer.

The protein localises to the cytoplasm. It carries out the reaction guanosine(37) in tRNA + S-adenosyl-L-methionine = N(1)-methylguanosine(37) in tRNA + S-adenosyl-L-homocysteine + H(+). In terms of biological role, specifically methylates guanosine-37 in various tRNAs. This is tRNA (guanine-N(1)-)-methyltransferase from Desulfitobacterium hafniense (strain Y51).